The chain runs to 321 residues: MKHIPVLEDGPWKTVCVKELNGLKKLKRKGKEPARRANGYKTFRLDLEAPEPRAVATNGLRDRTHRLQPVPVPVPVPVPVAPAVPPRGGTDTAGERGGSRAPEVSDARKRCFALGAVGPGLPTPPPPPPPAPQSQAPGGPEAQPFREPGLRPRILLCAPPARPAPSAPPAPPAPPESTVRPAPPTRPGESSYSSISHVIYNNHQDSSASPRKRPGEATAASSEIKALQQTRRLLANARERTRVHTISAAFEALRKQVPCYSYGQKLSKLAILRIACNYILSLARLADLDYSADHSNLSFSECVQRCTRTLQAEGRAKKRKE.

Disordered stretches follow at residues 59–193 (GLRD…SSYS) and 203–222 (HQDSSASPRKRPGEATAASS). Over residues 70–85 (VPVPVPVPVPVAPAVP) the composition is skewed to pro residues. The span at 93-109 (AGERGGSRAPEVSDARK) shows a compositional bias: basic and acidic residues. A compositionally biased stretch (pro residues) spans 121-132 (LPTPPPPPPPAP). Residues 133 to 143 (QSQAPGGPEAQ) show a composition bias toward low complexity. The segment covering 160–186 (PARPAPSAPPAPPAPPESTVRPAPPTR) has biased composition (pro residues). Positions 230 to 243 (TRRLLANARERTRV) are basic motif; degenerate. The bHLH domain occupies 230–282 (TRRLLANARERTRVHTISAAFEALRKQVPCYSYGQKLSKLAILRIACNYILSL). The helix-loop-helix motif stretch occupies residues 244-282 (HTISAAFEALRKQVPCYSYGQKLSKLAILRIACNYILSL).

As to quaternary structure, efficient DNA binding requires dimerization with another bHLH protein. Interacts with NEUROG3 and NEUROD1. Interacts with ZFPM2; mediates indirect interaction with GATA4. Forms a heterodimer with TCF3; repress transcription of TCF3 and TCF3/NEUROG3 dimer-induced transactivation of E box-dependent promoters. In terms of tissue distribution, expressed in lung, liver, kidney, heart and pancreas. Expressed in endothel of umbilical vessels.

Its subcellular location is the nucleus. It is found in the nucleus speckle. The protein resides in the cytoplasm. Functionally, transcription factor that binds a palindromic (canonical) core consensus DNA sequence 5'-CANNTG- 3' known as an E-box element, possibly as a heterodimer with other bHLH proteins. Regulates endothelial cell proliferation, migration and tube-like structures formation. Modulates endothelial cell differentiation through NOS3. May be implicated in specification and differentiation of neuronal cell lineages in the brain. May participate in kidney development and may be involved in podocyte differentiation. During early embryonic development is involved in tissue-specific differentiation processes that are dependent on class II bHLH factors and namely modulates the differentiation program initiated by the pro-endocrine factor NEUROG3. During myogenesis, may play a role during the transition of myoblasts from the proliferative phase to the differentiation phase. Positively regulates HAMP transcription in two ways, firstly by acting directly on the HAMP promoter via E-boxes binding and indirectly through increased phosphorylation of SMAD protein complex. Repress NEUROG3-dependent gene activation in a gene-specific manner through at least two mechanisms; requires only either the sequestering of a general partner such as TCF3 through heterodimerization, either also requires binding of the bHLH domain to DNA via a basic motif. This chain is Transcription factor ATOH8, found in Homo sapiens (Human).